The sequence spans 386 residues: Vesicle-associated protein 2-2 (386 aa).

Methionine 1 carries the N-acetylmethionine modification. The Cytoplasmic segment spans residues 1–363 (MNMPLLDIQP…TKKIVKEVHN (363 aa)). One can recognise an MSP domain in the interval 5–125 (LLDIQPRTLQ…EENKLRVTLV (121 aa)). Serine 279 is modified (phosphoserine). Residues 300–353 (ELKLVKDIEEMKLKVDALESKLKQADSTISKLMEERSISSQHRQSLQHELAELR) are a coiled coil. A helical; Anchor for type IV membrane protein membrane pass occupies residues 364-384 (GFPLLYVCVVAFIAYVIGHFL).

It belongs to the VAMP-associated protein (VAP) (TC 9.B.17) family. Interacts with cowpea mosaic virus (CPMV) NTP-binding protein (NTB).

The protein localises to the endoplasmic reticulum membrane. Functionally, may play a role in vesicle trafficking. This Arabidopsis thaliana (Mouse-ear cress) protein is Vesicle-associated protein 2-2 (PVA22).